The following is a 203-amino-acid chain: Small ribosomal subunit protein uS4 (203 aa).

Residues 93–173 enclose the S4 RNA-binding domain; that stretch reads RRFDNVVFRA…IPSWIQVDKA (81 aa).

It belongs to the universal ribosomal protein uS4 family. As to quaternary structure, part of the 30S ribosomal subunit. Contacts protein S5. The interaction surface between S4 and S5 is involved in control of translational fidelity.

Its function is as follows. One of the primary rRNA binding proteins, it binds directly to 16S rRNA where it nucleates assembly of the body of the 30S subunit. In terms of biological role, with S5 and S12 plays an important role in translational accuracy. In Pelodictyon phaeoclathratiforme (strain DSM 5477 / BU-1), this protein is Small ribosomal subunit protein uS4.